Reading from the N-terminus, the 413-residue chain is PCI domain-containing protein 2 homolog (413 aa).

Residues 222 to 403 enclose the PCI domain; it reads VAYNYFLGRK…QKLVISKTNA (182 aa).

Belongs to the CSN12 family.

The polypeptide is PCI domain-containing protein 2 homolog (Caenorhabditis briggsae).